A 319-amino-acid chain; its full sequence is Ferrochelatase (319 aa).

Fe cation contacts are provided by His194 and Glu275.

This sequence belongs to the ferrochelatase family.

The protein localises to the cytoplasm. The enzyme catalyses heme b + 2 H(+) = protoporphyrin IX + Fe(2+). Its pathway is porphyrin-containing compound metabolism; protoheme biosynthesis; protoheme from protoporphyrin-IX: step 1/1. Catalyzes the ferrous insertion into protoporphyrin IX. This Vibrio vulnificus (strain YJ016) protein is Ferrochelatase.